Here is a 455-residue protein sequence, read N- to C-terminus: Argininosuccinate lyase (455 aa).

This sequence belongs to the lyase 1 family. Argininosuccinate lyase subfamily.

The protein resides in the cytoplasm. It carries out the reaction 2-(N(omega)-L-arginino)succinate = fumarate + L-arginine. It functions in the pathway amino-acid biosynthesis; L-arginine biosynthesis; L-arginine from L-ornithine and carbamoyl phosphate: step 3/3. The protein is Argininosuccinate lyase of Caulobacter vibrioides (strain ATCC 19089 / CIP 103742 / CB 15) (Caulobacter crescentus).